The primary structure comprises 360 residues: 3-dehydroquinate synthase (360 aa).

Residues 71 to 76 (DGEQFK), 105 to 109 (GVIGD), 129 to 130 (TT), K142, K151, and 169 to 172 (FLKT) each bind NAD(+). Zn(2+) is bound by residues E184, H247, and H264.

Belongs to the sugar phosphate cyclases superfamily. Dehydroquinate synthase family. It depends on NAD(+) as a cofactor. Co(2+) is required as a cofactor. Zn(2+) serves as cofactor.

The protein resides in the cytoplasm. The enzyme catalyses 7-phospho-2-dehydro-3-deoxy-D-arabino-heptonate = 3-dehydroquinate + phosphate. The protein operates within metabolic intermediate biosynthesis; chorismate biosynthesis; chorismate from D-erythrose 4-phosphate and phosphoenolpyruvate: step 2/7. Functionally, catalyzes the conversion of 3-deoxy-D-arabino-heptulosonate 7-phosphate (DAHP) to dehydroquinate (DHQ). In Buchnera aphidicola subsp. Schizaphis graminum (strain Sg), this protein is 3-dehydroquinate synthase.